Consider the following 81-residue polypeptide: Sulfur carrier protein TusA (81 aa).

Cys19 serves as the catalytic Cysteine persulfide intermediate.

The protein belongs to the sulfur carrier protein TusA family.

Its subcellular location is the cytoplasm. Sulfur carrier protein which probably makes part of a sulfur-relay system. The sequence is that of Sulfur carrier protein TusA from Shewanella putrefaciens (strain CN-32 / ATCC BAA-453).